The following is a 207-amino-acid chain: Large ribosomal subunit protein uL3 (207 aa).

A disordered region spans residues Gly-126–Gly-149.

This sequence belongs to the universal ribosomal protein uL3 family. In terms of assembly, part of the 50S ribosomal subunit. Forms a cluster with proteins L14 and L19.

Its function is as follows. One of the primary rRNA binding proteins, it binds directly near the 3'-end of the 23S rRNA, where it nucleates assembly of the 50S subunit. The chain is Large ribosomal subunit protein uL3 from Deinococcus geothermalis (strain DSM 11300 / CIP 105573 / AG-3a).